Here is a 121-residue protein sequence, read N- to C-terminus: Large ribosomal subunit protein bL20 (121 aa).

Belongs to the bacterial ribosomal protein bL20 family.

Its function is as follows. Binds directly to 23S ribosomal RNA and is necessary for the in vitro assembly process of the 50S ribosomal subunit. It is not involved in the protein synthesizing functions of that subunit. The protein is Large ribosomal subunit protein bL20 of Koribacter versatilis (strain Ellin345).